Here is a 221-residue protein sequence, read N- to C-terminus: MVSFSSLALALSTVVGVLAAPGSEKYVELAKHQLTHSQTGTKNGYYYSFWTDNRGQVSYTNGKGGQYSVNWKDCGNFVAGKGWNPASAKTVTYSGNWKPSGNSYVSVYGWTQNPLIEFYIVESFGSYNPSTGATELGTVESDGGTYKIYKTKRVDAPSIEGKKTFDQFWSVRTSHRVGGTVTTKNHFNAWAKSGLKLGTFNYMILATEGYHSSGSATMTVS.

An N-terminal signal peptide occupies residues 1–19 (MVSFSSLALALSTVVGVLA). The region spanning 33 to 221 (QLTHSQTGTK…SSGSATMTVS (189 aa)) is the GH11 domain. Glu-117 (nucleophile) is an active-site residue. Glu-208 (proton donor) is an active-site residue.

It belongs to the glycosyl hydrolase 11 (cellulase G) family.

It localises to the secreted. It catalyses the reaction Endohydrolysis of (1-&gt;4)-beta-D-xylosidic linkages in xylans.. It participates in glycan degradation; xylan degradation. Its function is as follows. Endo-1,4-beta-xylanase involved in the hydrolysis of xylan, a major structural heterogeneous polysaccharide found in plant biomass representing the second most abundant polysaccharide in the biosphere, after cellulose. In Aspergillus clavatus (strain ATCC 1007 / CBS 513.65 / DSM 816 / NCTC 3887 / NRRL 1 / QM 1276 / 107), this protein is Probable endo-1,4-beta-xylanase B (xlnB).